Consider the following 103-residue polypeptide: Large ribosomal subunit protein bL21 (103 aa).

It belongs to the bacterial ribosomal protein bL21 family. Part of the 50S ribosomal subunit. Contacts protein L20.

Functionally, this protein binds to 23S rRNA in the presence of protein L20. This chain is Large ribosomal subunit protein bL21, found in Salmonella paratyphi A (strain ATCC 9150 / SARB42).